The sequence spans 197 residues: Probable nicotinate-nucleotide adenylyltransferase (197 aa).

Belongs to the NadD family.

It carries out the reaction nicotinate beta-D-ribonucleotide + ATP + H(+) = deamido-NAD(+) + diphosphate. The protein operates within cofactor biosynthesis; NAD(+) biosynthesis; deamido-NAD(+) from nicotinate D-ribonucleotide: step 1/1. Its function is as follows. Catalyzes the reversible adenylation of nicotinate mononucleotide (NaMN) to nicotinic acid adenine dinucleotide (NaAD). This is Probable nicotinate-nucleotide adenylyltransferase from Bordetella avium (strain 197N).